A 620-amino-acid chain; its full sequence is Glutathione-regulated potassium-efflux system protein KefC (620 aa).

Topologically, residues 1–3 are periplasmic; that stretch reads MDS. The chain crosses the membrane as a helical span at residues 4–24; sequence HTLLQALIYLGSAALIVPIAV. Position 25 (arginine 25) is a topological domain, cytoplasmic. A helical membrane pass occupies residues 26-46; the sequence is LGLGSVLGYLIAGCIIGPWGL. Over 47–53 the chain is Periplasmic; the sequence is RLVTDAE. The chain crosses the membrane as a helical span at residues 54–74; it reads SILHFAEIGVVLMLFVIGLEL. Residues 75–89 lie on the Cytoplasmic side of the membrane; the sequence is DPQRLWKLRASVFGG. The chain crosses the membrane as a helical span at residues 90–110; sequence GALQMGVCGGLIGLFCMFLGL. The Periplasmic portion of the chain corresponds to 111–113; it reads RWQ. Residues 114–134 traverse the membrane as a helical segment; it reads VAELIGMTLALSSTAIAMQAM. Over 135–148 the chain is Cytoplasmic; the sequence is NERNLTVSQVGRSA. The chain crosses the membrane as a helical span at residues 149-169; it reads FAVLLFQDIAAIPLVAMIPLL. Over 170 to 177 the chain is Periplasmic; the sequence is AASGASTT. Residues 178–198 form a helical membrane-spanning segment; the sequence is LGAFALSALKVAGALALVVLL. Residues 199–213 lie on the Cytoplasmic side of the membrane; it reads GRYVTRPALRFVARS. The chain crosses the membrane as a helical span at residues 214-233; it reads GLREVFSAVALFLVFGFGLL. At 234–236 the chain is on the periplasmic side; it reads LEE. The helical transmembrane segment at 237-254 threads the bilayer; the sequence is VGLSMAMGAFLAGVLLAS. The Cytoplasmic segment spans residues 255–269; sequence SEYRHALESDIEPFK. The chain crosses the membrane as a helical span at residues 270 to 290; it reads GLLLGLFFIGVGMSIDFGTLV. Over 291–293 the chain is Periplasmic; it reads ENP. Residues 294-314 traverse the membrane as a helical segment; the sequence is LRILLLLAGFLAIKIVMLWLV. Topologically, residues 315 to 326 are cytoplasmic; the sequence is ARPLGVPAKQRR. A helical membrane pass occupies residues 327 to 347; sequence WFAVLLGQGSEFAFVVFGAAQ. At 348–358 the chain is on the periplasmic side; it reads MADVLEPEWAK. The chain crosses the membrane as a helical span at residues 359-379; that stretch reads ALTLAVALSMAATPIFLVLLT. At 380 to 620 the chain is on the cytoplasmic side; that stretch reads RMEKTATGEA…ADEPEVKPSI (241 aa). An RCK N-terminal domain is found at 399–518; it reads QPRVIVAGFG…AGVAMPERET (120 aa). The disordered stretch occupies residues 599-620; that stretch reads QGTAEGKHSGEVADEPEVKPSI.

This sequence belongs to the monovalent cation:proton antiporter 2 (CPA2) transporter (TC 2.A.37) family. KefC subfamily. In terms of assembly, homodimer. Interacts with the regulatory subunit KefF.

It localises to the cell inner membrane. Functionally, pore-forming subunit of a potassium efflux system that confers protection against electrophiles. Catalyzes K(+)/H(+) antiport. The protein is Glutathione-regulated potassium-efflux system protein KefC of Salmonella typhimurium (strain LT2 / SGSC1412 / ATCC 700720).